Reading from the N-terminus, the 699-residue chain is Protein phosphatase 1 regulatory subunit 37 (699 aa).

The segment covering 1–12 (MEIPPQEAPPGP) has biased composition (pro residues). A disordered region spans residues 1–42 (MEIPPQEAPPGPGADGEAEEAPVEAPSPGPASPPADGRLKAA). Ser-50 and Ser-56 each carry phosphoserine. LRR repeat units lie at residues 220–240 (SLAV…MLLA), 248–269 (TLRE…AQLG), 277–297 (SLQI…AYIC), 306–326 (GLAT…AFLG), and 334–354 (SLET…RNLK). The disordered stretch occupies residues 467-667 (RLQLSASMPE…PPGPEAKVGS (201 aa)). Residues 510 to 525 (SDSDSDSEGEDRDEAD) show a composition bias toward acidic residues. A Phosphoserine modification is found at Ser-566. Pro residues-rich tracts occupy residues 588–613 (PPVP…PFPT) and 622–642 (DPGP…PPLP).

It belongs to the PPP1R37 family. In terms of assembly, interacts with PPP1CA.

Its function is as follows. Inhibits phosphatase activity of protein phosphatase 1 (PP1) complexes. This chain is Protein phosphatase 1 regulatory subunit 37 (PPP1R37), found in Bos taurus (Bovine).